A 422-amino-acid chain; its full sequence is Serine--tRNA ligase (422 aa).

Residues 1–20 are disordered; sequence MHDLKSIRDNPDGFDAGLKR. 229 to 231 lines the L-serine pocket; it reads TAE. 260-262 provides a ligand contact to ATP; sequence RSE. Glu283 serves as a coordination point for L-serine. 347 to 350 is an ATP binding site; sequence EISS. Position 383 (Ser383) interacts with L-serine.

It belongs to the class-II aminoacyl-tRNA synthetase family. Type-1 seryl-tRNA synthetase subfamily. As to quaternary structure, homodimer. The tRNA molecule binds across the dimer.

It is found in the cytoplasm. It carries out the reaction tRNA(Ser) + L-serine + ATP = L-seryl-tRNA(Ser) + AMP + diphosphate + H(+). The enzyme catalyses tRNA(Sec) + L-serine + ATP = L-seryl-tRNA(Sec) + AMP + diphosphate + H(+). It functions in the pathway aminoacyl-tRNA biosynthesis; selenocysteinyl-tRNA(Sec) biosynthesis; L-seryl-tRNA(Sec) from L-serine and tRNA(Sec): step 1/1. Catalyzes the attachment of serine to tRNA(Ser). Is also able to aminoacylate tRNA(Sec) with serine, to form the misacylated tRNA L-seryl-tRNA(Sec), which will be further converted into selenocysteinyl-tRNA(Sec). The chain is Serine--tRNA ligase from Paramagnetospirillum magneticum (strain ATCC 700264 / AMB-1) (Magnetospirillum magneticum).